We begin with the raw amino-acid sequence, 280 residues long: Eukaryotic translation initiation factor 3 subunit F-1 (280 aa).

One can recognise an MPN domain in the interval 8 to 138; sequence VRVHPVVLFQ…LRAYVCIQLG (131 aa).

It belongs to the eIF-3 subunit F family. Component of the eukaryotic translation initiation factor 3 (eIF-3) complex. The eIF-3 complex interacts with pix.

The protein resides in the cytoplasm. Its function is as follows. Component of the eukaryotic translation initiation factor 3 (eIF-3) complex, which is involved in protein synthesis of a specialized repertoire of mRNAs and, together with other initiation factors, stimulates binding of mRNA and methionyl-tRNAi to the 40S ribosome. The eIF-3 complex specifically targets and initiates translation of a subset of mRNAs involved in cell proliferation. The chain is Eukaryotic translation initiation factor 3 subunit F-1 from Drosophila erecta (Fruit fly).